The primary structure comprises 202 residues: Small ribosomal subunit protein uS5 (202 aa).

The S5 DRBM domain maps to 50 to 113 (LKQELLNLNL…REAKLNITPV (64 aa)).

Belongs to the universal ribosomal protein uS5 family. Part of the 30S ribosomal subunit. Contacts protein S4.

With S4 and S12 plays an important role in translational accuracy. The chain is Small ribosomal subunit protein uS5 from Pyrobaculum calidifontis (strain DSM 21063 / JCM 11548 / VA1).